Here is an 845-residue protein sequence, read N- to C-terminus: ATPase morc-1 (845 aa).

ATP is bound by residues N43, 88–90 (SAK), and 97–103 (RYGNGLK). N43 is a binding site for Mg(2+). The stretch at 284-311 (AAYNKILDEKNETVKKCEEEKALVMSEI) forms a coiled coil. K422 provides a ligand contact to ATP. Disordered regions lie at residues 566–590 (LPQK…SASS) and 628–739 (KMEP…GKAV). Over residues 574–590 (SAPSSSDSQNSIRSASS) the composition is skewed to low complexity. Over residues 637-646 (HDSHIAEVQR) the composition is skewed to basic and acidic residues.

As to quaternary structure, predominantly forms monomers and dimers, but multimerizes to form trimers and tetramers upon DNA binding. As to expression, expressed in germline and somatic cells.

The protein localises to the nucleus. The protein resides in the nuclear body. It carries out the reaction ATP + H2O = ADP + phosphate + H(+). Functionally, binds non-specifically to DNA and forms static foci which grow by recruiting other morc-1 molecules, and thereby stimulates conformational changes and compaction of DNA, which appears to be enhanced by ATP-binding, but does not require ATP activity. Preferentially binds to long DNAs. Compacts and entraps segments of DNA by sequentially forming loops along the DNA, beginning at the free ends of single- and double-tethered DNA. Does not extrude the DNA loops on compacted double-tethered DNA. Involved in gene silencing. Plays a role in germline RNA interference (RNAi), and in particular, the silencing of endogenous small interfering RNA (endo-siRNA) target genes. May play a role in heterochromatin localization and condensation, and the siRNAi-directed trimethylation of 'Lys-9' of histone H3 in hermaphrodite X chromosomes. Promotes transgenerational epigenetic inheritance and germline immortality. This chain is ATPase morc-1, found in Caenorhabditis elegans.